Here is a 518-residue protein sequence, read N- to C-terminus: MSAYSRRYTDGPSNYGQDVRGRSEKKVEASHTTKWSGTPSRHKKIGKEDFDTIVTGHLTQEQMDAYQQYFRIEEISDILRMASESQSEVLSLLPSGNIANNPNYEREPSPPPKYDAAGNRSNTREARTKLALEKERHYLVEVAAGSIKNYMSPIDYRKPVKTYEKIYIPVKDYPDINFVGLLLGPRGNTLRQLQEDSGARLAIRGKGSVKDGKSTSSNNDDDDSNSSLSFSNPNLNSSGNDDLHVVITSDSQSKIAKAIKLTNQVIEKAISSPVGQNDLKRGQLRELAILNGTLRETKPYNPETQQSRRSRPGLDVSQLVCKSCGKVGHFARDCKFRGTSDGNNNPIVQDQADSYQQTAPYSDSRRQREEEDPRNNGREEILPPWKKKKPNVPLPPWQKPQQPLPSTDAPPPPVGLAPPPSSLAPPPPPPSSLAPPPPPPPSSLAPPPPPSSDIAPPPPSSDRAPPPPPSGIAPPPPPSGIAPPPPKSPNGVAPPPPPANDAPPAPSSTKNPPPPPPA.

Disordered stretches follow at residues 1-47 (MSAY…KIGK), 94-124 (PSGN…SNTR), 202-241 (AIRG…SGND), and 295-314 (RETK…RPGL). Residues 19 to 31 (VRGRSEKKVEASH) are compositionally biased toward basic and acidic residues. The 67-residue stretch at 167–233 (YIPVKDYPDI…SNSSLSFSNP (67 aa)) folds into the KH domain. A compositionally biased stretch (low complexity) spans 225 to 240 (NSSLSFSNPNLNSSGN). The segment at 319 to 336 (LVCKSCGKVGHFARDCKF) adopts a CCHC-type zinc-finger fold. A disordered region spans residues 337-518 (RGTSDGNNNP…TKNPPPPPPA (182 aa)). The span at 340–361 (SDGNNNPIVQDQADSYQQTAPY) shows a compositional bias: polar residues. A compositionally biased stretch (basic and acidic residues) spans 363 to 381 (DSRRQREEEDPRNNGREEI). Pro residues predominate over residues 408-518 (DAPPPPVGLA…TKNPPPPPPA (111 aa)).

The protein belongs to the BBP/SF1 family.

It is found in the nucleus. Functionally, necessary for the splicing of pre-mRNA. Has a role in the recognition of the branch site (5'-UACUAAC-3'), the pyrimidine tract and the 3'-splice site at the 3'-end of introns. This is Branchpoint-bridging protein (BBP) from Debaryomyces hansenii (strain ATCC 36239 / CBS 767 / BCRC 21394 / JCM 1990 / NBRC 0083 / IGC 2968) (Yeast).